The chain runs to 158 residues: Acetolactate synthase small subunit (158 aa).

One can recognise an ACT domain in the interval 4 to 78; the sequence is ILSVLLENES…DVLRVIKVGQ (75 aa).

The protein belongs to the acetolactate synthase small subunit family. As to quaternary structure, dimer of large and small chains.

It catalyses the reaction 2 pyruvate + H(+) = (2S)-2-acetolactate + CO2. It functions in the pathway amino-acid biosynthesis; L-isoleucine biosynthesis; L-isoleucine from 2-oxobutanoate: step 1/4. Its pathway is amino-acid biosynthesis; L-valine biosynthesis; L-valine from pyruvate: step 1/4. The polypeptide is Acetolactate synthase small subunit (ilvH) (Buchnera aphidicola subsp. Schizaphis graminum (strain Sg)).